The sequence spans 276 residues: 2,3,4,5-tetrahydropyridine-2,6-dicarboxylate N-succinyltransferase (276 aa).

The substrate site is built by Arg-104 and Asp-141.

The protein belongs to the transferase hexapeptide repeat family. Homotrimer.

The protein resides in the cytoplasm. The enzyme catalyses (S)-2,3,4,5-tetrahydrodipicolinate + succinyl-CoA + H2O = (S)-2-succinylamino-6-oxoheptanedioate + CoA. It functions in the pathway amino-acid biosynthesis; L-lysine biosynthesis via DAP pathway; LL-2,6-diaminopimelate from (S)-tetrahydrodipicolinate (succinylase route): step 1/3. The protein is 2,3,4,5-tetrahydropyridine-2,6-dicarboxylate N-succinyltransferase of Pseudoalteromonas translucida (strain TAC 125).